The following is a 156-amino-acid chain: Small ribosomal subunit protein eS10 (156 aa).

Residues 91-156 (LKRQTRPEAA…FGRGRQEQEE (66 aa)) form a disordered region. A compositionally biased stretch (basic and acidic residues) spans 95 to 119 (TRPEAARPRPKEGAPRAQVGEDRAG).

Belongs to the eukaryotic ribosomal protein eS10 family.

The protein resides in the cytoplasm. The sequence is that of Small ribosomal subunit protein eS10 (RPS10) from Lumbricus rubellus (Humus earthworm).